The sequence spans 375 residues: Actin (375 aa).

The protein belongs to the actin family.

The protein localises to the cytoplasm. Its subcellular location is the cytoskeleton. The enzyme catalyses ATP + H2O = ADP + phosphate + H(+). Its function is as follows. Actins are highly conserved proteins that are involved in various types of cell motility and are ubiquitously expressed in all eukaryotic cells. In Giardia intestinalis (Giardia lamblia), this protein is Actin.